The following is a 61-amino-acid chain: Bowman-Birk type proteinase inhibitor B5 (61 aa).

Cystine bridges form between cysteine 5–cysteine 60, cysteine 6–cysteine 22, cysteine 9–cysteine 56, cysteine 12–cysteine 20, cysteine 29–cysteine 36, and cysteine 33–cysteine 48.

The protein belongs to the Bowman-Birk serine protease inhibitor family. As to expression, expressed in bulb (at protein level).

Serine protease inhibitor. Inhibits trypsin (Ki = 41 nM) and weakly inhibits chymotrypsin (Ki = 410 nM). Does not inhibit bacterial subtilisin. The protein is Bowman-Birk type proteinase inhibitor B5 of Hyacinthus orientalis (Common hyacinth).